Here is a 338-residue protein sequence, read N- to C-terminus: Ketol-acid reductoisomerase (NADP(+)) (338 aa).

The region spanning 1–181 (MNVYYDRDCD…GGGRTGIIET (181 aa)) is the KARI N-terminal Rossmann domain. NADP(+)-binding positions include 24–27 (YGSQ), Arg-47, Ser-50, Ser-52, and 82–85 (DEFQ). His-107 is an active-site residue. Gly-133 contributes to the NADP(+) binding site. Residues 182 to 327 (TFKDETETDL…GNLRAMMPWI (146 aa)) form the KARI C-terminal knotted domain. Asp-190, Glu-194, Glu-226, and Glu-230 together coordinate Mg(2+). Ser-251 contacts substrate.

This sequence belongs to the ketol-acid reductoisomerase family. The cofactor is Mg(2+).

The enzyme catalyses (2R)-2,3-dihydroxy-3-methylbutanoate + NADP(+) = (2S)-2-acetolactate + NADPH + H(+). The catalysed reaction is (2R,3R)-2,3-dihydroxy-3-methylpentanoate + NADP(+) = (S)-2-ethyl-2-hydroxy-3-oxobutanoate + NADPH + H(+). It participates in amino-acid biosynthesis; L-isoleucine biosynthesis; L-isoleucine from 2-oxobutanoate: step 2/4. It functions in the pathway amino-acid biosynthesis; L-valine biosynthesis; L-valine from pyruvate: step 2/4. Functionally, involved in the biosynthesis of branched-chain amino acids (BCAA). Catalyzes an alkyl-migration followed by a ketol-acid reduction of (S)-2-acetolactate (S2AL) to yield (R)-2,3-dihydroxy-isovalerate. In the isomerase reaction, S2AL is rearranged via a Mg-dependent methyl migration to produce 3-hydroxy-3-methyl-2-ketobutyrate (HMKB). In the reductase reaction, this 2-ketoacid undergoes a metal-dependent reduction by NADPH to yield (R)-2,3-dihydroxy-isovalerate. This Trichlorobacter lovleyi (strain ATCC BAA-1151 / DSM 17278 / SZ) (Geobacter lovleyi) protein is Ketol-acid reductoisomerase (NADP(+)).